The chain runs to 445 residues: Glucose-6-phosphate isomerase (445 aa).

Glu-284 acts as the Proton donor in catalysis. Residues His-305 and Lys-419 contribute to the active site.

The protein belongs to the GPI family.

The protein resides in the cytoplasm. The enzyme catalyses alpha-D-glucose 6-phosphate = beta-D-fructose 6-phosphate. It participates in carbohydrate biosynthesis; gluconeogenesis. The protein operates within carbohydrate degradation; glycolysis; D-glyceraldehyde 3-phosphate and glycerone phosphate from D-glucose: step 2/4. Its function is as follows. Catalyzes the reversible isomerization of glucose-6-phosphate to fructose-6-phosphate. The protein is Glucose-6-phosphate isomerase of Leptospira borgpetersenii serovar Hardjo-bovis (strain JB197).